Here is a 485-residue protein sequence, read N- to C-terminus: Amino acid permease 1 (485 aa).

The segment covering Met1–Glu15 has biased composition (polar residues). Residues Met1–Glu35 are disordered. The Cytoplasmic segment spans residues Met1–Thr40. The next 2 membrane-spanning stretches (helical) occupy residues Trp41–Ala61 and Trp62–Ile82. Residues Thr83–Tyr129 lie on the Cytoplasmic side of the membrane. A helical transmembrane segment spans residues Gly130–Val150. Topologically, residues Gly151–Thr166 are extracellular. A helical transmembrane segment spans residues Ile167–Pro187. Residues Asn188–Phe194 are Cytoplasmic-facing. The helical transmembrane segment at Leu195–Ile215 threads the bilayer. Residues Ala216 to Arg245 are Extracellular-facing. A helical membrane pass occupies residues Ser246 to Ile266. Over Gln267–Leu285 the chain is Cytoplasmic. A helical transmembrane segment spans residues Val286 to Phe306. The Extracellular portion of the chain corresponds to Gly307–Phe318. The chain crosses the membrane as a helical span at residues Gly319–Ile339. Over Gly340–Tyr394 the chain is Cytoplasmic. Transmembrane regions (helical) follow at residues Val395–Ile415 and Gly416–Thr436. At Lys437–Thr450 the chain is on the cytoplasmic side. A helical transmembrane segment spans residues Met451–Ile471. Residues Ser472–Glu485 lie on the Extracellular side of the membrane.

The protein belongs to the amino acid/polyamine transporter 2 family. Amino acid/auxin permease (AAAP) (TC 2.A.18.2) subfamily. Highly expressed in developing pods. Found in the endosperm and in the storage parenchyma and the outer epidermis cells of the developing embryo. Lower levels of expression in flowers, in the vascular system of the cotyledon and in the root epidermal cells, including root hairs and throughout the root tip.

It is found in the cell membrane. Inhibited by carbonylcyanide m-chlorophenylhydrazone and diethylpyrocarbonate (DEPC). Amino acid-proton symporter. Stereospecific transporter with a broad specificity for histidine, glutamate and neutral amino acids. Reduced affinities for asparagine and valine. Involved in amino acid uptake from the apoplastic cavity into the embryo cells for storage protein accumulation and in root amino acid uptake. This chain is Amino acid permease 1 (AAP1), found in Arabidopsis thaliana (Mouse-ear cress).